Consider the following 191-residue polypeptide: Fe/S biogenesis protein NfuA (191 aa).

2 residues coordinate [4Fe-4S] cluster: C149 and C152.

It belongs to the NfuA family. In terms of assembly, homodimer. The cofactor is [4Fe-4S] cluster.

In terms of biological role, involved in iron-sulfur cluster biogenesis. Binds a 4Fe-4S cluster, can transfer this cluster to apoproteins, and thereby intervenes in the maturation of Fe/S proteins. Could also act as a scaffold/chaperone for damaged Fe/S proteins. This chain is Fe/S biogenesis protein NfuA, found in Salmonella paratyphi A (strain ATCC 9150 / SARB42).